A 302-amino-acid polypeptide reads, in one-letter code: Aspartate carbamoyltransferase catalytic subunit (302 aa).

Arg-53 and Thr-54 together coordinate carbamoyl phosphate. Residue Lys-82 participates in L-aspartate binding. Residues Arg-103, His-131, and Gln-134 each coordinate carbamoyl phosphate. The L-aspartate site is built by Arg-164 and Arg-223. Positions 260 and 261 each coordinate carbamoyl phosphate.

Belongs to the aspartate/ornithine carbamoyltransferase superfamily. ATCase family. Heterooligomer of catalytic and regulatory chains.

The catalysed reaction is carbamoyl phosphate + L-aspartate = N-carbamoyl-L-aspartate + phosphate + H(+). The protein operates within pyrimidine metabolism; UMP biosynthesis via de novo pathway; (S)-dihydroorotate from bicarbonate: step 2/3. Catalyzes the condensation of carbamoyl phosphate and aspartate to form carbamoyl aspartate and inorganic phosphate, the committed step in the de novo pyrimidine nucleotide biosynthesis pathway. The chain is Aspartate carbamoyltransferase catalytic subunit from Methanococcus maripaludis (strain C6 / ATCC BAA-1332).